Reading from the N-terminus, the 178-residue chain is Endoribonuclease YbeY (178 aa).

Positions 118, 122, and 128 each coordinate Zn(2+).

This sequence belongs to the endoribonuclease YbeY family. Requires Zn(2+) as cofactor.

The protein resides in the cytoplasm. Functionally, single strand-specific metallo-endoribonuclease involved in late-stage 70S ribosome quality control and in maturation of the 3' terminus of the 16S rRNA. The protein is Endoribonuclease YbeY of Mycolicibacterium gilvum (strain PYR-GCK) (Mycobacterium gilvum (strain PYR-GCK)).